A 247-amino-acid polypeptide reads, in one-letter code: UPF0309 protein Teth39_1980 (247 aa).

Residues 31-213 (IANSLLKEED…EAEIVFIMIK (183 aa)) enclose the SIS domain.

The protein belongs to the UPF0309 family.

The chain is UPF0309 protein Teth39_1980 from Thermoanaerobacter pseudethanolicus (strain ATCC 33223 / 39E) (Clostridium thermohydrosulfuricum).